Here is a 434-residue protein sequence, read N- to C-terminus: Serine/threonine-protein kinase Sgk1-B (434 aa).

The tract at residues 68–94 (ESELLNENSSPPPSHSQQINLGPSSNP) is disordered. In terms of domain architecture, Protein kinase spans 101–358 (FQFLKIIGKG…FMEIKNHIFF (258 aa)). Residues 107–115 (IGKGSFGKV) and K130 contribute to the ATP site. Catalysis depends on D225, which acts as the Proton acceptor. The region spanning 359-434 (SPIDWDDLIN…SYAPPMDSYL (76 aa)) is the AGC-kinase C-terminal domain.

Belongs to the protein kinase superfamily. AGC Ser/Thr protein kinase family.

It is found in the cytoplasm. Its subcellular location is the nucleus. The protein resides in the endoplasmic reticulum. The catalysed reaction is L-seryl-[protein] + ATP = O-phospho-L-seryl-[protein] + ADP + H(+). The enzyme catalyses L-threonyl-[protein] + ATP = O-phospho-L-threonyl-[protein] + ADP + H(+). Protein kinase that may play an important role in cellular stress response. Plays an important role in activating certain potassium, sodium, and chloride channels, suggesting an involvement in the regulation of processes such as cell survival, neuronal excitability and renal sodium excretion. This chain is Serine/threonine-protein kinase Sgk1-B (sgk1-b), found in Xenopus laevis (African clawed frog).